A 457-amino-acid polypeptide reads, in one-letter code: G-protein coupled receptor 135 (457 aa).

The segment at 1-27 (MEEQARPPSRPAASATLPGSAHPGGAA) is disordered. The Extracellular segment spans residues 1–64 (MEEQARPPSR…EAAGSRGPAP (64 aa)). N-linked (GlcNAc...) asparagine glycosylation is present at N47. A helical membrane pass occupies residues 65 to 85 (LLWHGAAVAAQALVLLLIFLL). At 86–109 (SSLGNCAVMGVIVKHRQLRTVTNA) the chain is on the cytoplasmic side. Residues 110–130 (FILSLSLSDLLTALLCLPAAF) form a helical membrane-spanning segment. The Extracellular portion of the chain corresponds to 131-156 (LDLFAPPGDSGPWRSFCAASRFFSSC). The helical transmembrane segment at 157–177 (FGIVSTFSVALISLDRYCAIV) threads the bilayer. At 178 to 189 (RPPRDKLGRRRA) the chain is on the cytoplasmic side. A helical membrane pass occupies residues 190–210 (LQLLAGAWLAALGFSLPWELL). Topologically, residues 211–235 (RAPREPPTPQSFHRCLYRTSPDPAQ) are extracellular. A helical membrane pass occupies residues 236–256 (LGAAYSVGLVVACYLLPFLLM). At 257–295 (CFCRYHICKTVRLSDVRVRPMTTYARVLRFFSEVRTATT) the chain is on the cytoplasmic side. Residues 296 to 316 (VLIMIVFVICCWGPYCFLVLL) traverse the membrane as a helical segment. Topologically, residues 317–329 (AATRQGQTTQAPS) are extracellular. Residues 330–350 (LLNVAAVWLTWANGAINPVIY) traverse the membrane as a helical segment. The Cytoplasmic portion of the chain corresponds to 351–457 (AIRNPNISMF…HKSETRDSSI (107 aa)).

It belongs to the G-protein coupled receptor 1 family. In terms of assembly, interacts with MTNR1B. Interacts with ARRB1 and ARRB2 in a spontaneous and agonist-independent manner; leading to the internalization of GPR135 in the endosomal compartment.

The protein localises to the cell membrane. The protein resides in the endosome membrane. Its function is as follows. Orphan receptor. Has spontaneous activity for beta-arrestin recruitment. Shows a reciprocal regulatory interaction with the melatonin receptor MTNR1B most likely through receptor heteromerization. In Rattus norvegicus (Rat), this protein is G-protein coupled receptor 135 (Gpr135).